A 346-amino-acid chain; its full sequence is Heparan sulfate glucosamine 3-O-sulfotransferase 5 (346 aa).

The Cytoplasmic segment spans residues 1–12 (MLFKQQAWLRQK). Residues 13 to 32 (LLVLGSLAVGSLLYLVARVG) traverse the membrane as a helical; Signal-anchor for type II membrane protein segment. Residues 33-346 (SLDRLQPICP…QITGRTLNWP (314 aa)) are Lumenal-facing. A 3'-phosphoadenylyl sulfate-binding site is contributed by 100-104 (KGGTR). Residues 122-128 (EIHFFDN) and 155-158 (KSPA) each bind substrate. Residues Arg183 and Ser191 each contribute to the 3'-phosphoadenylyl sulfate site. Position 226–227 (226–227 (YK)) interacts with substrate. Residue Asn287 is glycosylated (N-linked (GlcNAc...) asparagine). Tyr293 serves as a coordination point for 3'-phosphoadenylyl sulfate. Cys294 and Cys304 are disulfide-bonded. 309–313 (KGRIH) contacts 3'-phosphoadenylyl sulfate.

The protein belongs to the sulfotransferase 1 family. Highly expressed in skeletal muscle and fetal brain, and also found in adult brain, spinal cord, cerebellum and colon.

The protein localises to the golgi apparatus membrane. It carries out the reaction alpha-D-glucosaminyl-[heparan sulfate](n) + 3'-phosphoadenylyl sulfate = 3-sulfo-alpha-D-glucosaminyl-[heparan sulfate](n) + adenosine 3',5'-bisphosphate + H(+). In terms of biological role, sulfotransferase that utilizes 3'-phospho-5'-adenylyl sulfate (PAPS) to catalyze the transfer of a sulfo group to position 3 of glucosamine residues in heparan. Catalyzes the rate limiting step in the biosynthesis of heparan sulfate (HSact). This modification is a crucial step in the biosynthesis of anticoagulant heparan sulfate as it completes the structure of the antithrombin pentasaccharide binding site. Also generates GlcUA-GlcNS or IdoUA-GlcNS and IdoUA2S-GlcNH2. The substrate-specific O-sulfation generates an enzyme-modified heparan sulfate which acts as a binding receptor to Herpes simplex virus-1 (HSV-1) and permits its entry. This chain is Heparan sulfate glucosamine 3-O-sulfotransferase 5 (HS3ST5), found in Homo sapiens (Human).